We begin with the raw amino-acid sequence, 5005 residues long: Bridge-like lipid transfer protein family member 1 (5005 aa).

Residues N26–Y46 traverse the membrane as a helical segment. Disordered regions lie at residues L691–D721, L1218–A1257, and G1269–Q1310. Low complexity-rich tracts occupy residues R700–P711 and S1226–S1240. The span at G1248–A1257 shows a compositional bias: basic and acidic residues. The span at S1278–L1303 shows a compositional bias: polar residues. Residues S1301, S1305, and S1323 each carry the phosphoserine modification. The residue at position 1325 (T1325) is a Phosphothreonine. Disordered stretches follow at residues S1343–F1376, E1400–D1427, T1521–F1548, and F1676–A1704. Phosphoserine is present on residues S1355 and S1406. A compositionally biased stretch (basic residues) spans T1521–L1530. Residues T1691–A1704 show a composition bias toward polar residues. Residues S1805 and S1808 each carry the phosphoserine modification. Disordered stretches follow at residues D1924–P1991, S2401–V2420, and T2598–V2677. 4 stretches are compositionally biased toward polar residues: residues L1931–D1948, T1959–S1971, S2401–D2418, and T2598–F2608. S2601 and S2603 each carry phosphoserine. The segment covering S2619–A2638 has biased composition (low complexity). Residues T2643–T2665 show a composition bias toward basic and acidic residues. S2755 bears the Phosphoserine mark. Residues R2928 to L2967 are disordered. Polar residues predominate over residues K2949–F2964. S3562 bears the Phosphoserine mark. Residues P3612 to A3622 are compositionally biased toward polar residues. Disordered stretches follow at residues P3612–N3661, S3686–Y3744, R3821–Q3843, Y3914–G3954, G4088–S4146, and Q4325–S4394. Phosphoserine is present on S3653. Over residues S3686–K3700 the composition is skewed to polar residues. The span at E3727 to E3736 shows a compositional bias: acidic residues. Positions R3821–S3837 are enriched in basic and acidic residues. Polar residues-rich tracts occupy residues T3931–L3940 and P4098–K4113. The segment covering L4122–S4146 has biased composition (low complexity). S4124 bears the Phosphoserine mark. Positions Q4325–K4358 are enriched in polar residues. Residues S4359–S4372 are compositionally biased toward low complexity. Residues K4381–S4394 show a composition bias toward polar residues.

As to expression, highly expressed in testis and ovary. Weakly or not expressed in other tissues.

Its subcellular location is the cell membrane. The protein resides in the endoplasmic reticulum membrane. The protein localises to the mitochondrion membrane. In terms of biological role, tube-forming lipid transport protein which provides phosphatidylethanolamine for glycosylphosphatidylinositol (GPI) anchor synthesis in the endoplasmic reticulum. Plays a role in endosomal trafficking and endosome recycling. Also involved in the actin cytoskeleton and cilia structural dynamics. Acts as a regulator of phagocytosis. The sequence is that of Bridge-like lipid transfer protein family member 1 from Homo sapiens (Human).